The sequence spans 347 residues: 3-isopropylmalate dehydrogenase (347 aa).

Substrate is bound by residues Arg-95, Arg-105, Arg-129, and Asp-220. Residues Asp-220, Asp-244, and Asp-248 each contribute to the Mg(2+) site. 280-292 is a binding site for NAD(+); it reads GSAPDIAGQGKAD.

This sequence belongs to the isocitrate and isopropylmalate dehydrogenases family. LeuB type 2 subfamily. As to quaternary structure, homodimer. Mg(2+) is required as a cofactor. It depends on Mn(2+) as a cofactor.

It localises to the cytoplasm. It carries out the reaction (2R,3S)-3-isopropylmalate + NAD(+) = 4-methyl-2-oxopentanoate + CO2 + NADH. Its pathway is amino-acid biosynthesis; L-leucine biosynthesis; L-leucine from 3-methyl-2-oxobutanoate: step 3/4. Functionally, catalyzes the oxidation of 3-carboxy-2-hydroxy-4-methylpentanoate (3-isopropylmalate) to 3-carboxy-4-methyl-2-oxopentanoate. The product decarboxylates to 4-methyl-2 oxopentanoate. The chain is 3-isopropylmalate dehydrogenase from Beutenbergia cavernae (strain ATCC BAA-8 / DSM 12333 / CCUG 43141 / JCM 11478 / NBRC 16432 / NCIMB 13614 / HKI 0122).